The primary structure comprises 202 residues: Protein G1-like4 (202 aa).

2 disordered regions span residues M1–A44 and R158–C202. Gly residues predominate over residues S12 to S22. A compositionally biased stretch (low complexity) spans S23–P36. The region spanning R41–K168 is the ALOG domain. Residues K166 to K170 carry the Nuclear localization signal motif. The span at Q173–H186 shows a compositional bias: low complexity. Residues P192–C202 are compositionally biased toward pro residues.

Belongs to the plant homeotic and developmental regulators ALOG protein family.

It localises to the nucleus. Probable transcription regulator that acts as a developmental regulator by promoting cell growth in response to light. In Oryza sativa subsp. indica (Rice), this protein is Protein G1-like4.